The chain runs to 276 residues: 4-deoxy-L-threo-5-hexosulose-uronate ketol-isomerase (276 aa).

Positions 194, 196, 201, and 243 each coordinate Zn(2+).

Belongs to the KduI family. The cofactor is Zn(2+).

The catalysed reaction is 5-dehydro-4-deoxy-D-glucuronate = 3-deoxy-D-glycero-2,5-hexodiulosonate. It participates in glycan metabolism; pectin degradation; 2-dehydro-3-deoxy-D-gluconate from pectin: step 4/5. Catalyzes the isomerization of 5-dehydro-4-deoxy-D-glucuronate to 3-deoxy-D-glycero-2,5-hexodiulosonate. The sequence is that of 4-deoxy-L-threo-5-hexosulose-uronate ketol-isomerase from Shouchella clausii (strain KSM-K16) (Alkalihalobacillus clausii).